Here is a 404-residue protein sequence, read N- to C-terminus: Cysteine desulfurase IscS (404 aa).

Residues 75–76 (AT), Asn155, Gln183, and 203–205 (SAH) each bind pyridoxal 5'-phosphate. Position 206 is an N6-(pyridoxal phosphate)lysine (Lys206). Thr243 lines the pyridoxal 5'-phosphate pocket. Residue Cys328 is the Cysteine persulfide intermediate of the active site. Cys328 contacts [2Fe-2S] cluster.

Belongs to the class-V pyridoxal-phosphate-dependent aminotransferase family. NifS/IscS subfamily. As to quaternary structure, homodimer. Forms a heterotetramer with IscU, interacts with other sulfur acceptors. Requires pyridoxal 5'-phosphate as cofactor.

It localises to the cytoplasm. The catalysed reaction is (sulfur carrier)-H + L-cysteine = (sulfur carrier)-SH + L-alanine. The protein operates within cofactor biosynthesis; iron-sulfur cluster biosynthesis. In terms of biological role, master enzyme that delivers sulfur to a number of partners involved in Fe-S cluster assembly, tRNA modification or cofactor biosynthesis. Catalyzes the removal of elemental sulfur atoms from cysteine to produce alanine. Functions as a sulfur delivery protein for Fe-S cluster synthesis onto IscU, an Fe-S scaffold assembly protein, as well as other S acceptor proteins. This Vibrio vulnificus (strain CMCP6) protein is Cysteine desulfurase IscS.